A 134-amino-acid polypeptide reads, in one-letter code: uncharacterized protein (134 aa).

A run of 3 helical transmembrane segments spans residues 21 to 41, 52 to 72, and 95 to 115; these read FSTT…LYLI, LVLL…TPYE, and IVMA…VYII.

The protein resides in the host membrane. This is an uncharacterized protein from Acidianus two-tailed virus (ATV).